A 339-amino-acid chain; its full sequence is Dihydroorotate dehydrogenase (quinone) (339 aa).

Residues 64 to 68 (AGADK) and Thr-88 each bind FMN. Residue Lys-68 participates in substrate binding. Position 113–117 (113–117 (NRNGF)) interacts with substrate. The FMN site is built by Asn-141 and Asn-174. Asn-174 lines the substrate pocket. Ser-177 acts as the Nucleophile in catalysis. Asn-179 contacts substrate. FMN is bound by residues Lys-219 and Thr-247. 248 to 249 (NT) is a substrate binding site. Residues Gly-270, Gly-299, and 320 to 321 (YS) each bind FMN.

This sequence belongs to the dihydroorotate dehydrogenase family. Type 2 subfamily. As to quaternary structure, monomer. Requires FMN as cofactor.

Its subcellular location is the cell membrane. The catalysed reaction is (S)-dihydroorotate + a quinone = orotate + a quinol. It participates in pyrimidine metabolism; UMP biosynthesis via de novo pathway; orotate from (S)-dihydroorotate (quinone route): step 1/1. In terms of biological role, catalyzes the conversion of dihydroorotate to orotate with quinone as electron acceptor. This chain is Dihydroorotate dehydrogenase (quinone), found in Haemophilus influenzae (strain PittGG).